The chain runs to 488 residues: Acetyl-coenzyme A carboxylase carboxyl transferase subunit beta, chloroplastic (488 aa).

One can recognise a CoA carboxyltransferase N-terminal domain in the interval 221-488; that stretch reads LWIQCDNCYA…FFPLNKNEIK (268 aa). Residues Cys225, Cys228, Cys244, and Cys247 each coordinate Zn(2+). The C4-type zinc finger occupies 225–247; that stretch reads CDNCYALIYKKALKLKLNVCEQC.

Belongs to the AccD/PCCB family. As to quaternary structure, acetyl-CoA carboxylase is a heterohexamer composed of biotin carboxyl carrier protein, biotin carboxylase and 2 subunits each of ACCase subunit alpha and ACCase plastid-coded subunit beta (accD). Zn(2+) serves as cofactor.

The protein localises to the plastid. Its subcellular location is the chloroplast stroma. It catalyses the reaction N(6)-carboxybiotinyl-L-lysyl-[protein] + acetyl-CoA = N(6)-biotinyl-L-lysyl-[protein] + malonyl-CoA. It functions in the pathway lipid metabolism; malonyl-CoA biosynthesis; malonyl-CoA from acetyl-CoA: step 1/1. In terms of biological role, component of the acetyl coenzyme A carboxylase (ACC) complex. Biotin carboxylase (BC) catalyzes the carboxylation of biotin on its carrier protein (BCCP) and then the CO(2) group is transferred by the transcarboxylase to acetyl-CoA to form malonyl-CoA. The polypeptide is Acetyl-coenzyme A carboxylase carboxyl transferase subunit beta, chloroplastic (Aethionema grandiflorum (Persian stone-cress)).